Here is a 98-residue protein sequence, read N- to C-terminus: Feather beta keratin (98 aa).

Residue serine 2 is modified to N-acetylserine.

It belongs to the avian keratin family. In terms of assembly, the avian keratins (F-ker, S-ker, C-ker and B-ker) are a complex mixture of very similar polypeptides.

This chain is Feather beta keratin, found in Cathartes aura (Turkey vulture).